Consider the following 286-residue polypeptide: NADH-cytochrome b5 reductase 1 (286 aa).

A helical membrane pass occupies residues F6 to L26. Residues Q52–Q155 form the FAD-binding FR-type domain. FAD contacts are provided by residues D135 to G150 and S161 to L193.

It belongs to the flavoprotein pyridine nucleotide cytochrome reductase family. In terms of assembly, monomer. It depends on FAD as a cofactor.

The protein localises to the endoplasmic reticulum membrane. It is found in the mitochondrion outer membrane. It catalyses the reaction 2 Fe(III)-[cytochrome b5] + NADH = 2 Fe(II)-[cytochrome b5] + NAD(+) + H(+). Functionally, electron donor reductase for cytochrome b5. The cytochrome b5/NADH cytochrome b5 reductase electron transfer system supports the catalytic activity of several sterol biosynthetic enzymes. The protein is NADH-cytochrome b5 reductase 1 (cyb5r1) of Dictyostelium discoideum (Social amoeba).